A 303-amino-acid polypeptide reads, in one-letter code: Paired immunoglobulin-like type 2 receptor alpha (303 aa).

The N-terminal stretch at 1–19 (MGRPLLLPLLPLLLPPAFL) is a signal peptide. Topologically, residues 20–197 (QPSGSTGSGP…DSWHISLETA (178 aa)) are extracellular. The Ig-like V-type domain occupies 32–150 (LYGVTQPKHL…SIEGTKLSIT (119 aa)). Asn-100 is a glycosylation site (N-linked (GlcNAc...) asparagine). The chain crosses the membrane as a helical span at residues 198-218 (VGVAVAVTVLGIMILGLICLL). Residues 219–303 (RWRRRKGQQR…NETLYSVLKA (85 aa)) are Cytoplasmic-facing. The segment at 226–296 (QQRTKATTPA…RPLKSPQNET (71 aa)) is disordered. 2 consecutive short sequence motifs (ITIM motif) follow at residues 267-272 (IVYASL) and 296-301 (TLYSVL).

In terms of assembly, monomer. Interacts with PTPN6/SHP-1 and PTPN11/SHP-2 upon tyrosine phosphorylation. As to quaternary structure, (Microbial infection) Interacts with herpes simplex virus 1 glycoprotein B. According to PubMed:10660620, N- and O-glycosylated. According to PubMed:10903717, only N-glycosylated. In terms of processing, phosphorylated on tyrosine residues. Predominantly detected in hemopoietic tissues and is expressed by monocytes, macrophages, and granulocytes, but not by lymphocytes. Also strongly expressed by dendritic cells (DC); preferentially by CD14+/CD1a- DC derived from CD34+ progenitors. Also expressed by CD11c+ blood and tonsil DC, but not by CD11c- DC precursors.

The protein localises to the cell membrane. It localises to the secreted. Its function is as follows. Paired receptors consist of highly related activating and inhibitory receptors and are widely involved in the regulation of the immune system. PILRA is thought to act as a cellular signaling inhibitory receptor by recruiting cytoplasmic phosphatases like PTPN6/SHP-1 and PTPN11/SHP-2 via their SH2 domains that block signal transduction through dephosphorylation of signaling molecules. Receptor for PIANP. In terms of biological role, (Microbial infection) Acts as an entry co-receptor for herpes simplex virus 1. In Homo sapiens (Human), this protein is Paired immunoglobulin-like type 2 receptor alpha (PILRA).